Consider the following 190-residue polypeptide: Endoribonuclease YbeY (190 aa).

Positions 1–20 (MDVENDRPPRRGAAGERNSG) are disordered. Positions 147, 151, and 157 each coordinate Zn(2+).

The protein belongs to the endoribonuclease YbeY family. Requires Zn(2+) as cofactor.

The protein resides in the cytoplasm. In terms of biological role, single strand-specific metallo-endoribonuclease involved in late-stage 70S ribosome quality control and in maturation of the 3' terminus of the 16S rRNA. The protein is Endoribonuclease YbeY of Nitrobacter hamburgensis (strain DSM 10229 / NCIMB 13809 / X14).